Here is an 86-residue protein sequence, read N- to C-terminus: Cell division topological specificity factor (86 aa).

It belongs to the MinE family.

Prevents the cell division inhibition by proteins MinC and MinD at internal division sites while permitting inhibition at polar sites. This ensures cell division at the proper site by restricting the formation of a division septum at the midpoint of the long axis of the cell. The protein is Cell division topological specificity factor of Shewanella pealeana (strain ATCC 700345 / ANG-SQ1).